Consider the following 544-residue polypeptide: Methionine--tRNA ligase (544 aa).

Positions 10 to 20 match the 'HIGH' region motif; the sequence is PYANGSLHLGH. Cysteine 141, cysteine 144, cysteine 153, and cysteine 156 together coordinate Zn(2+). Residues 329–333 carry the 'KMSKS' region motif; the sequence is KLSTS. Position 332 (threonine 332) interacts with ATP.

The protein belongs to the class-I aminoacyl-tRNA synthetase family. MetG type 1 subfamily. Monomer. Zn(2+) is required as a cofactor.

It is found in the cytoplasm. It catalyses the reaction tRNA(Met) + L-methionine + ATP = L-methionyl-tRNA(Met) + AMP + diphosphate. In terms of biological role, is required not only for elongation of protein synthesis but also for the initiation of all mRNA translation through initiator tRNA(fMet) aminoacylation. The protein is Methionine--tRNA ligase of Bacillus cereus (strain 03BB102).